The sequence spans 83 residues: U20-theraphotoxin-Cg1a 1 (83 aa).

Positions 1–21 are cleaved as a signal peptide; sequence MKVSVLITLAVLGVMFVWTSA. Positions 22 to 47 are excised as a propeptide; the sequence is AELEERGSDQPAWLKSLERIFQSEER. 3 cysteine pairs are disulfide-bonded: cysteine 49/cysteine 63, cysteine 56/cysteine 68, and cysteine 62/cysteine 76.

This sequence belongs to the neurotoxin 10 (Hwtx-1) family. 40 (Jztx-35) subfamily. In terms of tissue distribution, expressed by the venom gland.

Its subcellular location is the secreted. Probable ion channel inhibitor. The sequence is that of U20-theraphotoxin-Cg1a 1 from Chilobrachys guangxiensis (Chinese earth tiger tarantula).